A 436-amino-acid polypeptide reads, in one-letter code: Fibrinogen gamma chain (436 aa).

The N-terminal stretch at 1 to 25 is a signal peptide; that stretch reads MSWSLQPPSFLLCCLLLLFSPTGLA. The N-linked (GlcNAc...) asparagine glycan is linked to asparagine 77. The 247-residue stretch at 169-415 folds into the Fibrinogen C-terminal domain; it reads QIHDTTGKDC…ETTMKIIPFN (247 aa). Cysteines 178 and 207 form a disulfide. Residues aspartate 343, aspartate 345, and glycine 349 each contribute to the Ca(2+) site. Cysteine 351 and cysteine 364 are disulfide-bonded. Residue glutamine 423 forms an Isoglutamyl lysine isopeptide (Gln-Lys) (interchain with K-431) linkage. Serine 430 carries the post-translational modification Phosphoserine. Residue lysine 431 forms an Isoglutamyl lysine isopeptide (Lys-Gln) (interchain with Q-423) linkage.

Heterohexamer; disulfide linked. Contains 2 sets of 3 non-identical chains (alpha, beta and gamma). The 2 heterotrimers are in head to head conformation with the N-termini in a small central domain. In terms of processing, conversion of fibrinogen to fibrin is triggered by thrombin, which cleaves fibrinopeptides A and B from alpha and beta chains, and thus exposes the N-terminal polymerization sites responsible for the formation of the soft clot. The soft clot is converted into the hard clot by factor XIIIA which catalyzes the epsilon-(gamma-glutamyl)lysine cross-linking between gamma chains (stronger) and between alpha chains (weaker) of different monomers.

The protein localises to the secreted. Functionally, together with fibrinogen alpha (FGA) and fibrinogen beta (FGB), polymerizes to form an insoluble fibrin matrix. Fibrin has a major function in hemostasis as one of the primary components of blood clots. In addition, functions during the early stages of wound repair to stabilize the lesion and guide cell migration during re-epithelialization. Was originally thought to be essential for platelet aggregation, based on in vitro studies using anticoagulated blood. However, subsequent studies have shown that it is not absolutely required for thrombus formation in vivo. Enhances expression of SELP in activated platelets via an ITGB3-dependent pathway. Maternal fibrinogen is essential for successful pregnancy. Fibrin deposition is also associated with infection, where it protects against IFNG-mediated hemorrhage. May also facilitate the immune response via both innate and T-cell mediated pathways. The protein is Fibrinogen gamma chain (Fgg) of Mus musculus (Mouse).